The primary structure comprises 389 residues: Phospho-N-acetylmuramoyl-pentapeptide-transferase (389 aa).

10 helical membrane passes run R25–I45, T73–L93, F97–Y117, F135–A155, S189–G209, G222–M242, A259–F279, V286–I306, I311–V331, and Q366–L386.

The protein belongs to the glycosyltransferase 4 family. MraY subfamily. It depends on Mg(2+) as a cofactor.

It is found in the cell inner membrane. It catalyses the reaction UDP-N-acetyl-alpha-D-muramoyl-L-alanyl-gamma-D-glutamyl-meso-2,6-diaminopimeloyl-D-alanyl-D-alanine + di-trans,octa-cis-undecaprenyl phosphate = di-trans,octa-cis-undecaprenyl diphospho-N-acetyl-alpha-D-muramoyl-L-alanyl-D-glutamyl-meso-2,6-diaminopimeloyl-D-alanyl-D-alanine + UMP. It participates in cell wall biogenesis; peptidoglycan biosynthesis. In terms of biological role, catalyzes the initial step of the lipid cycle reactions in the biosynthesis of the cell wall peptidoglycan: transfers peptidoglycan precursor phospho-MurNAc-pentapeptide from UDP-MurNAc-pentapeptide onto the lipid carrier undecaprenyl phosphate, yielding undecaprenyl-pyrophosphoryl-MurNAc-pentapeptide, known as lipid I. The protein is Phospho-N-acetylmuramoyl-pentapeptide-transferase of Paraburkholderia phymatum (strain DSM 17167 / CIP 108236 / LMG 21445 / STM815) (Burkholderia phymatum).